A 260-amino-acid polypeptide reads, in one-letter code: Collagenase (260 aa).

The N-terminal stretch at 1 to 16 (MKFLLVFALALATTSA) is a signal peptide. Positions 17–30 (FQHPASIFELREGR) are excised as a propeptide. The region spanning 31–257 (IINGYEAYTG…YMDWIQQNTG (227 aa)) is the Peptidase S1 domain. Cysteine 60 and cysteine 76 form a disulfide bridge. Active-site charge relay system residues include histidine 75 and aspartate 118. Disulfide bonds link cysteine 181–cysteine 196 and cysteine 206–cysteine 234. The Charge relay system role is filled by serine 210.

It belongs to the peptidase S1 family.

Its subcellular location is the secreted. The catalysed reaction is Hydrolysis of proteins including native collagen at Xaa-|-Ala bond leaving an N-terminal (75%) and a C-terminal (25%) fragment.. Its activity is regulated as follows. Inhibited by diisopropylfluorophosphate. In terms of biological role, this enzyme is a serine protease capable of degrading the native triple helix of collagen. Also cleaves the B chain of insulin at the 15-Leu-|-Try-16 and 22-Arg-|-Gly-23 bonds. Hydrolyzes casein, but not Px-Pro-Leu-Gly-Pro-DArg, BzArgNHPh, AcTyrNHPh, 2-naphthyl phosphate, 2-naphthyl butyrate, 2-naphthyl caprylate, 2-naphthyl myristate, L-leucine 2-2-naphthylamide, L-valine 2-naphthylamide, L-cysteine 2-naphthylamide or L-glutarylphenylalanine 2-naphthylamide. The sequence is that of Collagenase from Hypoderma lineatum (Early cattle grub).